Consider the following 343-residue polypeptide: 3-dehydroquinate synthase (343 aa).

Residues serine 61–lysine 66, glycine 95–valine 96, threonine 119–threonine 120, lysine 132, lysine 141, asparagine 142, and phenylalanine 159–threonine 162 each bind NAD(+). Zn(2+) is bound by residues glutamate 174, histidine 231, and histidine 248.

Belongs to the sugar phosphate cyclases superfamily. Dehydroquinate synthase family. Homodimer. NAD(+) is required as a cofactor. The cofactor is Co(2+). Requires Zn(2+) as cofactor.

The protein localises to the cytoplasm. It catalyses the reaction 7-phospho-2-dehydro-3-deoxy-D-arabino-heptonate = 3-dehydroquinate + phosphate. The protein operates within metabolic intermediate biosynthesis; chorismate biosynthesis; chorismate from D-erythrose 4-phosphate and phosphoenolpyruvate: step 2/7. In terms of biological role, catalyzes the conversion of 3-deoxy-D-arabino-heptulosonate 7-phosphate (DAHP) to dehydroquinate (DHQ). In Helicobacter pylori (strain ATCC 700392 / 26695) (Campylobacter pylori), this protein is 3-dehydroquinate synthase.